A 75-amino-acid polypeptide reads, in one-letter code: U14-hexatoxin-Mg1a (75 aa).

Residues 1-19 form the signal peptide; sequence MKLTLFILIVFVVLANVYA. The propeptide occupies 20–31; that stretch reads AGISERNIIGGR.

In terms of processing, contains 4 disulfide bonds. As to expression, expressed by the venom gland.

Its subcellular location is the secreted. Functionally, no toxicity is observed upon intracranial injection into mice and intrathorax injection into crickets. The polypeptide is U14-hexatoxin-Mg1a (Macrothele gigas (Japanese funnel web spider)).